Consider the following 474-residue polypeptide: AAA-ATPase At3g28610 (474 aa).

The first 25 residues, 1 to 25 (MMGNMFGSSLASLFFLWATIQQIFP), serve as a signal peptide directing secretion. Residue 244-251 (GPPGTGKS) coordinates ATP.

This sequence belongs to the AAA ATPase family. BCS1 subfamily. Requires Mg(2+) as cofactor.

The enzyme catalyses ATP + H2O = ADP + phosphate + H(+). This Arabidopsis thaliana (Mouse-ear cress) protein is AAA-ATPase At3g28610.